The following is a 596-amino-acid chain: Proline--tRNA ligase (596 aa).

The protein belongs to the class-II aminoacyl-tRNA synthetase family. ProS type 1 subfamily. As to quaternary structure, homodimer.

The protein resides in the cytoplasm. The catalysed reaction is tRNA(Pro) + L-proline + ATP = L-prolyl-tRNA(Pro) + AMP + diphosphate. Functionally, catalyzes the attachment of proline to tRNA(Pro) in a two-step reaction: proline is first activated by ATP to form Pro-AMP and then transferred to the acceptor end of tRNA(Pro). As ProRS can inadvertently accommodate and process non-cognate amino acids such as alanine and cysteine, to avoid such errors it has two additional distinct editing activities against alanine. One activity is designated as 'pretransfer' editing and involves the tRNA(Pro)-independent hydrolysis of activated Ala-AMP. The other activity is designated 'posttransfer' editing and involves deacylation of mischarged Ala-tRNA(Pro). The misacylated Cys-tRNA(Pro) is not edited by ProRS. In Prochlorococcus marinus (strain NATL1A), this protein is Proline--tRNA ligase.